Reading from the N-terminus, the 87-residue chain is Defensin-like protein 175 (87 aa).

The signal sequence occupies residues 1–23; the sequence is MAKATSSLVVPIIFLVIFALVEQ. Intrachain disulfides connect cysteine 27/cysteine 66, cysteine 36/cysteine 55, cysteine 39/cysteine 60, and cysteine 43/cysteine 62.

This sequence belongs to the DEFL family.

The protein resides in the secreted. The chain is Defensin-like protein 175 from Arabidopsis thaliana (Mouse-ear cress).